We begin with the raw amino-acid sequence, 820 residues long: Trimethylamine-N-oxide reductase (820 aa).

Residues 1–33 (MAITRRSFLKGVATTSAASVIGPSLLASASANA) constitute a signal peptide (tat-type signal). Residue S179 participates in Mo-bis(molybdopterin guanine dinucleotide) binding.

This sequence belongs to the prokaryotic molybdopterin-containing oxidoreductase family. Requires Mo-bis(molybdopterin guanine dinucleotide) as cofactor. Predicted to be exported by the Tat system. The position of the signal peptide cleavage has not been experimentally proven.

The protein localises to the periplasm. The enzyme catalyses trimethylamine + 2 Fe(III)-[cytochrome c] + H2O = trimethylamine N-oxide + 2 Fe(II)-[cytochrome c] + 3 H(+). Functionally, reduces trimethylamine-N-oxide (TMAO) into trimethylamine; an anaerobic reaction coupled to energy-yielding reactions. In Vibrio parahaemolyticus serotype O3:K6 (strain RIMD 2210633), this protein is Trimethylamine-N-oxide reductase (torA).